We begin with the raw amino-acid sequence, 525 residues long: KSTWLTKTRNIWSAPSPTHLMISMITWPVMSNSPNNVLNIEGCPSLYKFNPFRGGLNRIVEWILAPEEPKALVYADNIYIVHSNTWYSIDLEKGEANCTRQHMQAAMYYILTRGWSDNGDPMFNQTWATFAMNIAPALVVDSSCLIMNLQIKTYGQGSGNAATFINNHLLSTLVLDQWNLMRQPRPDSEEFKSIEDKLGINFKIERSIDDIRGKLRQLVPLAQPGYLSGGVEPEQSSPTVELDLLGWSATYSKDLGIYVPVLDKERLFCSAAYPKGVENKSLKSKVGIEQAYKVVRYEALRLVGGWNYPLLNKACKNNAGAARRHLEAKGFPLDEFLAEWSELSEFGEAFEGFNIKLTVTSESLAELNKPVPPKPPNVNRPVNTGGLKAVSNALKTGRYRNEAGLSGLVLLATARSRLQDAVKAKAEAEKLHKSKPDDPDADWFERSETLSDLLEKADIASKVAHSALVETSDALEAVQSTSVYTPKYPEVKNPQTASNPVVGLHLPAKRATGVQAALLGAGTSR.

A RdRp catalytic domain is found at Leu72 to Ala272.

In terms of assembly, interacts with VP3 in the cytoplasm. Post-translationally, may exist in multiple phosphorylated forms.

It localises to the virion. It carries out the reaction RNA(n) + a ribonucleoside 5'-triphosphate = RNA(n+1) + diphosphate. RNA-dependent RNA polymerase which is found both free and covalently attached to the genomic RNA. May also contain guanylyl and methyl transferase activities. In Gallus gallus (Chicken), this protein is RNA-directed RNA polymerase (VP1).